Here is a 536-residue protein sequence, read N- to C-terminus: Probable tyrosyl-DNA phosphodiesterase (536 aa).

Catalysis depends on H122, which acts as the Nucleophile. K124 lines the substrate pocket. The interval 315–318 (SMGS) is interaction with DNA. The active-site Proton donor/acceptor is H401. K403 contacts substrate.

This sequence belongs to the tyrosyl-DNA phosphodiesterase family.

The protein localises to the nucleus. DNA repair enzyme that can remove a variety of covalent adducts from DNA through hydrolysis of a 3'-phosphodiester bond, giving rise to DNA with a free 3' phosphate. Catalyzes the hydrolysis of dead-end complexes between DNA and the topoisomerase I active site tyrosine residue. Hydrolyzes 3'-phosphoglycolates on protruding 3' ends on DNA double-strand breaks due to DNA damage by radiation and free radicals. Acts on blunt-ended double-strand DNA breaks and on single-stranded DNA. May have low 3'exonuclease activity and may be able to remove a single nucleoside from the 3'end of DNA and RNA molecules with 3'hydroxyl groups. Has no exonuclease activity towards DNA or RNA with a 3'phosphate. The polypeptide is Probable tyrosyl-DNA phosphodiesterase (Schizosaccharomyces pombe (strain 972 / ATCC 24843) (Fission yeast)).